A 114-amino-acid chain; its full sequence is Fluoride-specific ion channel FluC 2 (114 aa).

4 consecutive transmembrane segments (helical) span residues 3-23, 31-51, 57-77, and 92-112; these read YVII…ECWL, LMTA…WILA, GIEL…TFCM, and MIYL…GWNV. Na(+) is bound by residues Gly-67 and Thr-70.

The protein belongs to the fluoride channel Fluc/FEX (TC 1.A.43) family.

It is found in the cell membrane. It catalyses the reaction fluoride(in) = fluoride(out). With respect to regulation, na(+) is not transported, but it plays an essential structural role and its presence is essential for fluoride channel function. In terms of biological role, fluoride-specific ion channel. Important for reducing fluoride concentration in the cell, thus reducing its toxicity. This Shouchella clausii (strain KSM-K16) (Alkalihalobacillus clausii) protein is Fluoride-specific ion channel FluC 2.